A 102-amino-acid polypeptide reads, in one-letter code: Parathymosin (102 aa).

A disordered region spans residues 1–102 (MSEKSVEAAA…RQKTENGASA (102 aa)). Serine 2 bears the N-acetylserine mark. Phosphoserine is present on serine 2. The residue at position 4 (lysine 4) is an N6-acetyllysine. 2 positions are modified to phosphoserine: serine 5 and serine 13. Residues 13-37 (SAKDLKEKKDKVEEKAGRKERKKEV) are compositionally biased toward basic and acidic residues. Residue lysine 15 is modified to N6-acetyllysine. The span at 38-75 (VEEEENGAEEEEEETAEDGEDDDEGDEEDEEEEEEEDE) shows a compositional bias: acidic residues. Position 52 is a phosphothreonine (threonine 52). An N6-acetyllysine modification is found at lysine 92.

This sequence belongs to the pro/parathymosin family.

Its function is as follows. Parathymosin may mediate immune function by blocking the effect of prothymosin alpha which confers resistance to certain opportunistic infections. This chain is Parathymosin (Ptms), found in Rattus norvegicus (Rat).